A 343-amino-acid polypeptide reads, in one-letter code: Holliday junction branch migration complex subunit RuvB (343 aa).

A large ATPase domain (RuvB-L) region spans residues 1 to 182 (MTDPIPLHTP…FGIPVRLNFY (182 aa)). Residues Leu-21, Arg-22, Gly-63, Lys-66, Thr-67, Thr-68, Arg-172, Tyr-182, and Arg-219 each contribute to the ATP site. Thr-67 contributes to the Mg(2+) binding site. Positions 183–253 (TEEELEKVVT…IADAALTRLE (71 aa)) are small ATPAse domain (RuvB-S). The interval 256 to 343 (GLGLDAMDRR…SQTGLFDGKS (88 aa)) is head domain (RuvB-H). The DNA site is built by Arg-292, Arg-311, and Arg-316.

It belongs to the RuvB family. In terms of assembly, homohexamer. Forms an RuvA(8)-RuvB(12)-Holliday junction (HJ) complex. HJ DNA is sandwiched between 2 RuvA tetramers; dsDNA enters through RuvA and exits via RuvB. An RuvB hexamer assembles on each DNA strand where it exits the tetramer. Each RuvB hexamer is contacted by two RuvA subunits (via domain III) on 2 adjacent RuvB subunits; this complex drives branch migration. In the full resolvosome a probable DNA-RuvA(4)-RuvB(12)-RuvC(2) complex forms which resolves the HJ.

The protein resides in the cytoplasm. It catalyses the reaction ATP + H2O = ADP + phosphate + H(+). The RuvA-RuvB-RuvC complex processes Holliday junction (HJ) DNA during genetic recombination and DNA repair, while the RuvA-RuvB complex plays an important role in the rescue of blocked DNA replication forks via replication fork reversal (RFR). RuvA specifically binds to HJ cruciform DNA, conferring on it an open structure. The RuvB hexamer acts as an ATP-dependent pump, pulling dsDNA into and through the RuvAB complex. RuvB forms 2 homohexamers on either side of HJ DNA bound by 1 or 2 RuvA tetramers; 4 subunits per hexamer contact DNA at a time. Coordinated motions by a converter formed by DNA-disengaged RuvB subunits stimulates ATP hydrolysis and nucleotide exchange. Immobilization of the converter enables RuvB to convert the ATP-contained energy into a lever motion, pulling 2 nucleotides of DNA out of the RuvA tetramer per ATP hydrolyzed, thus driving DNA branch migration. The RuvB motors rotate together with the DNA substrate, which together with the progressing nucleotide cycle form the mechanistic basis for DNA recombination by continuous HJ branch migration. Branch migration allows RuvC to scan DNA until it finds its consensus sequence, where it cleaves and resolves cruciform DNA. This is Holliday junction branch migration complex subunit RuvB from Erythrobacter litoralis (strain HTCC2594).